The primary structure comprises 832 residues: Sodium/hydrogen exchanger 3 (832 aa).

A signal peptide spans 1 to 29 (MSGRGGCGPCWGLLLALVLALGALPWTQG). The Extracellular portion of the chain corresponds to 30 to 50 (AEQEHHDEIQGFQIVTFKWHH). The helical transmembrane segment at 51-73 (VQDPYIIALWVLVASLAKIVFHL) threads the bilayer. Topologically, residues 74–81 (SHKVTSVV) are cytoplasmic. Residues 82 to 101 (PESALLIVLGLVLGGIVLAA) traverse the membrane as a helical segment. The Extracellular segment spans residues 102-110 (DHIASFTLT). Residues 111 to 128 (PTVFFFYLLPPIVLDAGY) traverse the membrane as a helical segment. Residues 129–131 (FMP) are Cytoplasmic-facing. The helical transmembrane segment at 132 to 167 (NRLFFSNLGSILLYAVVGTVWNAATTGLSLYGVFLS) threads the bilayer. A 1,2-diacyl-sn-glycero-3-phospho-(1D-myo-inositol) contacts are provided by Gly-140 and Ser-141. The Extracellular portion of the chain corresponds to 168–180 (GIMGELKIGLLDF). Residues 181-202 (LLFGSLIAAVDPVAVLAVFEEV) traverse the membrane as a helical segment. Residues 203 to 204 (HV) lie on the Cytoplasmic side of the membrane. The chain crosses the membrane as a helical span at residues 205-236 (NEVLFIIVFGESLLNDAVTVVLYNVFQSFVTL). The Extracellular portion of the chain corresponds to 237–243 (GGDKVTG). A helical membrane pass occupies residues 244 to 278 (VDCVKGIVSFFVVSLGGTLVGVVFAFLLSLVTRFT). Over 279-280 (KH) the chain is Cytoplasmic. The chain crosses the membrane as a helical span at residues 281–303 (VRVIEPGFVFIISYLSYLTSEML). Over 304–305 (SL) the chain is Extracellular. The chain crosses the membrane as a helical span at residues 306–322 (SSILAITFCGICCQKYV). Over 323–329 (KANISEQ) the chain is Cytoplasmic. A helical membrane pass occupies residues 330 to 358 (SATTVRYTMKMLASGAETIIFMFLGISAV). Residues 359–366 (DPLIWTWN) lie on the Extracellular side of the membrane. Residues 367 to 388 (TAFVLLTLLFVSVFRAIGVVLQ) form a helical membrane-spanning segment. The Cytoplasmic portion of the chain corresponds to 389–401 (TWLLNRYRMVQLE). Met-397 serves as a coordination point for a 1,2-diacyl-sn-glycero-3-phospho-(1D-myo-inositol). A helical transmembrane segment spans residues 402 to 425 (LIDQVVMSYGGLRGAVAFALVALL). Residues 426–432 (DGNKVKE) are Extracellular-facing. A helical transmembrane segment spans residues 433–466 (KNLFVSTTIIVVFFTVIFQGLTIKPLVQWLKVKR). Residues 467 to 832 (SEHREPKLNE…GAEHPESTHM (366 aa)) are Cytoplasmic-facing. A 1,2-diacyl-sn-glycero-3-phospho-(1D-myo-inositol)-binding residues include Gln-496, Ile-497, and His-499. 2 positions are modified to phosphoserine: Ser-554 and Ser-562. Residues 575-589 (RPSTVEASVSYLLRE) form an interaction with EZR region. The tract at residues 590–667 (SASAVCLDMQ…RKRLESFKSA (78 aa)) is interaction with NHERF4. The segment at 591–696 (ASAVCLDMQS…AQKRRNSSVP (106 aa)) is interaction with AHCYL1. Residues Ser-592 and Ser-607 each carry the phosphoserine modification. Phosphoserine; by SGK1 is present on Ser-663. The segment at 664 to 706 (FKSAKLGLGQSKKATKHKRERERAQKRRNSSVPNGKLPLDSPA) is disordered. The segment covering 676–692 (KATKHKRERERAQKRRN) has biased composition (basic residues). Phosphoserine is present on residues Ser-719, Ser-813, and Ser-816.

Belongs to the monovalent cation:proton antiporter 1 (CPA1) transporter (TC 2.A.36) family. Homodimer. Found in the forms of complex and dynamic macromolecular complexes. Interacts with CHP1; this interaction increases trafficking and activity at the plasma membrane of SLC9A3. Interacts with CHP2 and SHANK2. Interacts with NHERF4 and interaction decreases in response to elevated calcium ion levels. Binds NHERF1 and NHERF2. Interacts with PDZK1 (via C-terminal PDZ domain). Interacts with AHCYL1; interaction is required for SLC9A3 activity. Interacts with EZR; interaction targets SLC9A3 to the apical membrane. Interacts with SNX27 (via PDZ domains); directs SLC9A3 membrane insertion from early endosomes to the plasma membrane. In terms of processing, phosphorylated by PKA, which inhibits activity. Phosphorylation at Ser-663 by SGK1 is associated with increased abundance at the cell membrane and activity. Phosphorylation at Ser-719 by CSNK2A1 regulates SLC9A3 activity through the formation of multiple signaling complexes. As to expression, intestinal and kidney specific. Most abundant in kidney cortex, followed equally by ileum and ascending colon, then kidney medulla and jejunum. Is absent from duodenum and descending colon.

It is found in the apical cell membrane. The protein resides in the cell membrane. Its subcellular location is the recycling endosome membrane. It localises to the early endosome membrane. The catalysed reaction is Na(+)(in) + H(+)(out) = Na(+)(out) + H(+)(in). Its activity is regulated as follows. Seems to switch between active and inactive modes in response to various stimuli. Activated directly or indirectly by membrane phosphatidylinositol (PIs). Regulated by a variety of auxiliary proteins, which facilitate the maturation, cell surface expression and function of the transporter. Inhibited specifically by the drug tenapanor. Functionally, plasma membrane Na(+)/H(+) antiporter. Exchanges intracellular H(+) ions for extracellular Na(+) in 1:1 stoichiometry, playing a key role in salt and fluid absorption and pH homeostasis. Major apical Na(+)/H(+) exchanger in kidney and intestine playing an important role in renal and intestine Na(+) absorption and blood pressure regulation. The polypeptide is Sodium/hydrogen exchanger 3 (SLC9A3) (Oryctolagus cuniculus (Rabbit)).